Consider the following 101-residue polypeptide: Urease subunit beta (101 aa).

It belongs to the urease beta subunit family. In terms of assembly, heterotrimer of UreA (gamma), UreB (beta) and UreC (alpha) subunits. Three heterotrimers associate to form the active enzyme.

The protein localises to the cytoplasm. The catalysed reaction is urea + 2 H2O + H(+) = hydrogencarbonate + 2 NH4(+). Its pathway is nitrogen metabolism; urea degradation; CO(2) and NH(3) from urea (urease route): step 1/1. The polypeptide is Urease subunit beta (Sinorhizobium medicae (strain WSM419) (Ensifer medicae)).